Here is a 91-residue protein sequence, read N- to C-terminus: Probable Fe(2+)-trafficking protein (91 aa).

Belongs to the Fe(2+)-trafficking protein family. As to quaternary structure, monomer.

In terms of biological role, could be a mediator in iron transactions between iron acquisition and iron-requiring processes, such as synthesis and/or repair of Fe-S clusters in biosynthetic enzymes. This Klebsiella pneumoniae subsp. pneumoniae (strain ATCC 700721 / MGH 78578) protein is Probable Fe(2+)-trafficking protein.